The following is a 198-amino-acid chain: Myc target protein 1 homolog (198 aa).

A Bipartite nuclear localization signal motif is present at residues 52–72 (RRRASASISPRMPKSSSRRPR). Disordered regions lie at residues 58–83 (SISP…LNRS) and 172–198 (NNSL…FPDS). The segment covering 172–181 (NNSLRLGPST) has biased composition (polar residues).

Belongs to the MYCT1 family.

It localises to the nucleus. Its function is as follows. May regulate certain MYC target genes, MYC seems to be a direct upstream transcriptional activator. The sequence is that of Myc target protein 1 homolog (myct1) from Xenopus tropicalis (Western clawed frog).